Reading from the N-terminus, the 205-residue chain is Probable anaerobic dimethyl sulfoxide reductase chain YnfG (205 aa).

4Fe-4S ferredoxin-type domains lie at 5-33 (YGFF…LGPE), 59-89 (FAYY…KRED), and 90-119 (GFVV…YNAE). 16 residues coordinate [4Fe-4S] cluster: Cys-14, Cys-17, Cys-20, Cys-24, Cys-67, Cys-70, Cys-75, Cys-79, Cys-99, Cys-102, Cys-105, Cys-109, Cys-126, Cys-129, Cys-141, and Cys-145. The disordered stretch occupies residues 183–205 (IKPNANSRPTGDTTGYLANPEEV). Residues 186-195 (NANSRPTGDT) are compositionally biased toward polar residues.

In terms of assembly, the complex consists of three subunits: YnfF, the reductase; YnfG, an electron transfer protein, and YnfH, a membrane anchor protein. Requires [4Fe-4S] cluster as cofactor.

Its function is as follows. Electron transfer subunit of the terminal reductase during anaerobic growth on various sulfoxide and N-oxide compounds. This is Probable anaerobic dimethyl sulfoxide reductase chain YnfG (ynfG) from Escherichia coli O6:H1 (strain CFT073 / ATCC 700928 / UPEC).